The following is a 278-amino-acid chain: Glutamyl-Q tRNA(Asp) synthetase (278 aa).

L-glutamate contacts are provided by residues 4 to 8 (RFAPS) and Glu-40. Residues 7 to 17 (PSPTGPLHLGH) carry the 'HIGH' region motif. Residues Cys-96, Cys-98, Tyr-123, and Cys-127 each coordinate Zn(2+). Positions 193 and 211 each coordinate L-glutamate. Positions 249 to 253 (RLAKR) match the 'KMSKS' region motif. Lys-252 contributes to the ATP binding site.

Belongs to the class-I aminoacyl-tRNA synthetase family. GluQ subfamily. Zn(2+) is required as a cofactor.

Functionally, catalyzes the tRNA-independent activation of glutamate in presence of ATP and the subsequent transfer of glutamate onto a tRNA(Asp). Glutamate is transferred on the 2-amino-5-(4,5-dihydroxy-2-cyclopenten-1-yl) moiety of the queuosine in the wobble position of the QUC anticodon. This chain is Glutamyl-Q tRNA(Asp) synthetase (gluQ), found in Rhodobacter capsulatus (strain ATCC BAA-309 / NBRC 16581 / SB1003).